We begin with the raw amino-acid sequence, 74 residues long: UPF0346 protein RBAM_019500 (74 aa).

It belongs to the UPF0346 family.

The sequence is that of UPF0346 protein RBAM_019500 from Bacillus velezensis (strain DSM 23117 / BGSC 10A6 / LMG 26770 / FZB42) (Bacillus amyloliquefaciens subsp. plantarum).